Consider the following 511-residue polypeptide: Zinc finger CCCH-type with G patch domain-containing protein (511 aa).

Met-1 bears the N-acetylmethionine mark. Ser-70 carries the post-translational modification Phosphoserine. The interval 92 to 129 (PGAPCNDSETAPGSEVQPGSTSSALEEEEEDPDLEELS) is disordered. Positions 98–115 (DSETAPGSEVQPGSTSSA) are enriched in polar residues. Residues 116–127 (LEEEEEDPDLEE) show a composition bias toward acidic residues. The C3H1-type zinc-finger motif lies at 174-200 (KSLKPCPFFLEGKCRFKENCRFSHGQV). Residues 266 to 291 (PPLRTEATESSDSDTGDASDSSYARV) form a disordered region. Ser-276 carries the post-translational modification Phosphoserine. Thr-280 carries the post-translational modification Phosphothreonine. The G-patch domain occupies 313–359 (TRGIGSKLLVKMGYEFGKGLGRHAEGRVEPIHAVVLPRGKSLDQCAE). Ser-353 carries the phosphoserine modification. Disordered regions lie at residues 363-393 (KKTKRGQAGSNRPPKCRRSGSRPEGRPPPRN) and 490-511 (AQEADLQRKQRKADTHRKMTEF). Over residues 491 to 511 (QEADLQRKQRKADTHRKMTEF) the composition is skewed to basic and acidic residues.

In terms of assembly, interacts with CHD4/Mi-2; the interaction is direct.

The protein resides in the nucleus. In terms of biological role, transcription repressor that specifically binds the 5'-GGAG[GA]A[GA]A-3' consensus sequence. Represses transcription by recruiting the chromatin multiprotein complex NuRD to target promoters. Negatively regulates expression of EGFR, a gene involved in cell proliferation, survival and migration. Its ability to repress genes of the EGFR pathway suggest it may act as a tumor suppressor. The sequence is that of Zinc finger CCCH-type with G patch domain-containing protein (Zgpat) from Mus musculus (Mouse).